The primary structure comprises 481 residues: Coniferyl aldehyde dehydrogenase (481 aa).

Catalysis depends on residues Glu221 and Cys255.

It belongs to the aldehyde dehydrogenase family. As to quaternary structure, homodimer.

It catalyses the reaction (E)-coniferaldehyde + NADP(+) + H2O = (E)-ferulate + NADPH + 2 H(+). It carries out the reaction (E)-coniferaldehyde + NAD(+) + H2O = (E)-ferulate + NADH + 2 H(+). Catalyzes the NAD(+)-dependent oxidation of coniferyl aldehyde to ferulic acid and which is induced during growth with eugenol as the carbon source. The polypeptide is Coniferyl aldehyde dehydrogenase (calB) (Pseudomonas sp. (strain HR199 / DSM 7063)).